The following is a 185-amino-acid chain: Gastrokine-1 (185 aa).

The N-terminal stretch at 1–20 (MKFTIVFAGLLGVFLAPALA) is a signal peptide. Residues 54–150 (NNGWDSWNSI…MCRGIPTYMA (97 aa)) enclose the BRICHOS domain. An intrachain disulfide couples Cys81 to Cys142.

This sequence belongs to the gastrokine family. As to expression, expressed in stomach (at protein level). No expression is detected in cancer tissue or gastric cancer cell lines.

The protein resides in the secreted. It is found in the cytoplasmic granule. It localises to the golgi apparatus. Functionally, has mitogenic activity and may be involved in maintaining the integrity of the gastric mucosal epithelium. The protein is Gastrokine-1 (GKN1) of Homo sapiens (Human).